Consider the following 173-residue polypeptide: NADH-ubiquinone oxidoreductase chain 6 (173 aa).

5 consecutive transmembrane segments (helical) span residues 1–21, 27–47, 48–68, 87–107, and 139–159; these read MTYF…AVAS, YGVV…LSLG, ASFV…VVFV, VIGY…ISGF, and WGVG…FVVL.

This sequence belongs to the complex I subunit 6 family.

It localises to the mitochondrion membrane. It catalyses the reaction a ubiquinone + NADH + 5 H(+)(in) = a ubiquinol + NAD(+) + 4 H(+)(out). In terms of biological role, core subunit of the mitochondrial membrane respiratory chain NADH dehydrogenase (Complex I) that is believed to belong to the minimal assembly required for catalysis. Complex I functions in the transfer of electrons from NADH to the respiratory chain. The immediate electron acceptor for the enzyme is believed to be ubiquinone. The polypeptide is NADH-ubiquinone oxidoreductase chain 6 (MT-ND6) (Brachyramphus marmoratus (Marbled murrelet)).